The following is a 367-amino-acid chain: MKGKKPSIEIATSNPSLPEDLVVSCLARVSRLYYPTLSLVSKSFRSLIASPDLYKTRSLLGRTESCLYLCLRYSPEDNPRWFTLCRKPNRRTLSKEKNESSGNLLVPIPIINSPPLEWSSIVAVGSHLYAINGPIEDAPCSNVSFLDCRSHTWLEAPSMRVAHTNSQLDGKMYLAGSSENVDSLNCIQVFSTKTQTWKPVPFQKRIFGVGDLEGKIYTICRTECGQGVTIKPKDLTCDVVGFCGEKDWSSVCMIGNIVYFYRPNGEFLWIYSGKGESARRNLKGLEGLPKFDDYASVKLVDYGGKLMVLWDTYVPESESKEKMIWCAEISLQKKCNNEEIWGTVEWFDAVLTVPEDCKFVRAIAATV.

In terms of domain architecture, F-box spans 11–57 (ATSNPSLPEDLVVSCLARVSRLYYPTLSLVSKSFRSLIASPDLYKTR). Kelch repeat units lie at residues 127–171 (HLYA…LDGK) and 172–216 (MYLA…EGKI).

The sequence is that of Putative F-box/kelch-repeat protein At4g39600 from Arabidopsis thaliana (Mouse-ear cress).